The sequence spans 354 residues: UDP-N-acetylglucosamine--N-acetylmuramyl-(pentapeptide) pyrophosphoryl-undecaprenol N-acetylglucosamine transferase (354 aa).

UDP-N-acetyl-alpha-D-glucosamine-binding positions include 12-14 (TGG), Asn124, Arg163, Ser187, Ile240, and Gln285.

Belongs to the glycosyltransferase 28 family. MurG subfamily.

It localises to the cell inner membrane. It carries out the reaction di-trans,octa-cis-undecaprenyl diphospho-N-acetyl-alpha-D-muramoyl-L-alanyl-D-glutamyl-meso-2,6-diaminopimeloyl-D-alanyl-D-alanine + UDP-N-acetyl-alpha-D-glucosamine = di-trans,octa-cis-undecaprenyl diphospho-[N-acetyl-alpha-D-glucosaminyl-(1-&gt;4)]-N-acetyl-alpha-D-muramoyl-L-alanyl-D-glutamyl-meso-2,6-diaminopimeloyl-D-alanyl-D-alanine + UDP + H(+). It participates in cell wall biogenesis; peptidoglycan biosynthesis. Cell wall formation. Catalyzes the transfer of a GlcNAc subunit on undecaprenyl-pyrophosphoryl-MurNAc-pentapeptide (lipid intermediate I) to form undecaprenyl-pyrophosphoryl-MurNAc-(pentapeptide)GlcNAc (lipid intermediate II). This Methylococcus capsulatus (strain ATCC 33009 / NCIMB 11132 / Bath) protein is UDP-N-acetylglucosamine--N-acetylmuramyl-(pentapeptide) pyrophosphoryl-undecaprenol N-acetylglucosamine transferase.